The primary structure comprises 249 residues: Triosephosphate isomerase (249 aa).

A substrate-binding site is contributed by 11–13 (NWK). Histidine 91 serves as the catalytic Electrophile. The active-site Proton acceptor is glutamate 163. Substrate contacts are provided by residues glycine 169, serine 208, and 229–230 (GG).

It belongs to the triosephosphate isomerase family. In terms of assembly, homodimer.

It localises to the cytoplasm. The catalysed reaction is D-glyceraldehyde 3-phosphate = dihydroxyacetone phosphate. It functions in the pathway carbohydrate biosynthesis; gluconeogenesis. Its pathway is carbohydrate degradation; glycolysis; D-glyceraldehyde 3-phosphate from glycerone phosphate: step 1/1. Involved in the gluconeogenesis. Catalyzes stereospecifically the conversion of dihydroxyacetone phosphate (DHAP) to D-glyceraldehyde-3-phosphate (G3P). This Pseudoalteromonas translucida (strain TAC 125) protein is Triosephosphate isomerase.